The following is a 188-amino-acid chain: Ribosome-recycling factor (188 aa).

This sequence belongs to the RRF family.

The protein localises to the cytoplasm. Responsible for the release of ribosomes from messenger RNA at the termination of protein biosynthesis. May increase the efficiency of translation by recycling ribosomes from one round of translation to another. In Anaeromyxobacter dehalogenans (strain 2CP-1 / ATCC BAA-258), this protein is Ribosome-recycling factor.